The chain runs to 451 residues: Adenylyltransferase and sulfurtransferase MOCS3-1 (451 aa).

The segment at 42-62 (GEDSDEAEESSNDMPTPQTKL) is disordered. Acidic residues predominate over residues 43 to 52 (EDSDEAEESS). Thr60 is subject to Phosphothreonine. ATP contacts are provided by residues Gly99, Asp120, 127 to 131 (SNLHR), Lys144, and 188 to 189 (DN). Residues Cys229 and Cys232 each contribute to the Zn(2+) site. The Glycyl thioester intermediate; for adenylyltransferase activity role is filled by Cys246. Cys304 and Cys307 together coordinate Zn(2+). The 97-residue stretch at 353 to 449 (QSQPHLLLDV…WTGSVDATFP (97 aa)) folds into the Rhodanese domain. Cys408 serves as the catalytic Cysteine persulfide intermediate; for sulfurtransferase activity.

In the N-terminal section; belongs to the HesA/MoeB/ThiF family. UBA4 subfamily. It depends on Zn(2+) as a cofactor.

The protein resides in the cytoplasm. It catalyses the reaction [molybdopterin-synthase sulfur-carrier protein]-C-terminal Gly-Gly + ATP + H(+) = [molybdopterin-synthase sulfur-carrier protein]-C-terminal Gly-Gly-AMP + diphosphate. It carries out the reaction [molybdopterin-synthase sulfur-carrier protein]-C-terminal Gly-Gly-AMP + S-sulfanyl-L-cysteinyl-[cysteine desulfurase] + AH2 = [molybdopterin-synthase sulfur-carrier protein]-C-terminal-Gly-aminoethanethioate + L-cysteinyl-[cysteine desulfurase] + A + AMP + 2 H(+). The protein operates within tRNA modification; 5-methoxycarbonylmethyl-2-thiouridine-tRNA biosynthesis. Its pathway is cofactor biosynthesis; molybdopterin biosynthesis. In terms of biological role, plays a central role in 2-thiolation of mcm(5)S(2)U at tRNA wobble positions of cytosolic tRNA(Lys), tRNA(Glu) and tRNA(Gln). Also essential during biosynthesis of the molybdenum cofactor. Acts by mediating the C-terminal thiocarboxylation of sulfur carriers URM1 and MOCS2A. Its N-terminus first activates URM1 and MOCS2A as acyl-adenylates (-COAMP), then the persulfide sulfur on the catalytic cysteine is transferred to URM1 and MOCS2A to form thiocarboxylation (-COSH) of their C-terminus. The reaction probably involves hydrogen sulfide that is generated from the persulfide intermediate and that acts as a nucleophile towards URM1 and MOCS2A. Subsequently, a transient disulfide bond is formed. Does not use thiosulfate as sulfur donor; NFS1 probably acting as a sulfur donor for thiocarboxylation reactions. The chain is Adenylyltransferase and sulfurtransferase MOCS3-1 from Drosophila pseudoobscura pseudoobscura (Fruit fly).